Consider the following 83-residue polypeptide: Cell division protein ZapB (83 aa).

The stretch at 7 to 80 forms a coiled coil; it reads EMLEKLEAKV…RVRTLLGKMD (74 aa).

The protein belongs to the ZapB family. In terms of assembly, homodimer. The ends of the coiled-coil dimer bind to each other, forming polymers. Interacts with FtsZ.

It is found in the cytoplasm. In terms of biological role, non-essential, abundant cell division factor that is required for proper Z-ring formation. It is recruited early to the divisome by direct interaction with FtsZ, stimulating Z-ring assembly and thereby promoting cell division earlier in the cell cycle. Its recruitment to the Z-ring requires functional FtsA or ZipA. This is Cell division protein ZapB from Photobacterium profundum (strain SS9).